Consider the following 354-residue polypeptide: Uroporphyrinogen decarboxylase (354 aa).

Substrate contacts are provided by residues 27-31 (RQAGR), Asp77, Tyr154, Ser209, and His327.

It belongs to the uroporphyrinogen decarboxylase family. In terms of assembly, homodimer.

Its subcellular location is the cytoplasm. It carries out the reaction uroporphyrinogen III + 4 H(+) = coproporphyrinogen III + 4 CO2. It participates in porphyrin-containing compound metabolism; protoporphyrin-IX biosynthesis; coproporphyrinogen-III from 5-aminolevulinate: step 4/4. Its function is as follows. Catalyzes the decarboxylation of four acetate groups of uroporphyrinogen-III to yield coproporphyrinogen-III. The protein is Uroporphyrinogen decarboxylase of Shewanella loihica (strain ATCC BAA-1088 / PV-4).